A 1047-amino-acid polypeptide reads, in one-letter code: UPF0182 protein Mlut_14990 (1047 aa).

Composition is skewed to gly residues over residues 1 to 27 (MSFG…GQSG) and 49 to 59 (GPGGPFGGGGS). The disordered stretch occupies residues 1 to 66 (MSFGQGGGGP…GGSSAARGRG (66 aa)). 7 consecutive transmembrane segments (helical) span residues 71 to 91 (PSAL…FVVF), 114 to 134 (VLAK…AVWL), 168 to 188 (LVFL…AMNG), 214 to 234 (FFMA…SVVL), 266 to 286 (AHIG…FWLN), 314 to 334 (AILA…VVSG), and 341 to 361 (IGTA…PFIV). Disordered regions lie at residues 544-568 (GAPA…TFSG), 941-965 (GDSG…PTAP), and 1007-1047 (EALK…TPSG). Polar residues predominate over residues 555–565 (TADSQEDTAYT). Low complexity predominate over residues 1015–1037 (ADDALGGDAPAQEQAPAEASPAP). Over residues 1038–1047 (SSSPSPTPSG) the composition is skewed to pro residues.

Belongs to the UPF0182 family.

It is found in the cell membrane. This is UPF0182 protein Mlut_14990 from Micrococcus luteus (strain ATCC 4698 / DSM 20030 / JCM 1464 / CCM 169 / CCUG 5858 / IAM 1056 / NBRC 3333 / NCIMB 9278 / NCTC 2665 / VKM Ac-2230) (Micrococcus lysodeikticus).